We begin with the raw amino-acid sequence, 569 residues long: Laccase-13 (569 aa).

An N-terminal signal peptide occupies residues 1–21 (MEQLRPFFLLLAIFVASLVNA). Plastocyanin-like domains are found at residues 29 to 145 (VIQE…PPLS) and 157 to 308 (REIT…YKDA). Asn75 carries an N-linked (GlcNAc...) asparagine glycan. Residues His79, His81, His124, and His126 each contribute to the Cu cation site. Residues Asn186, Asn296, Asn330, Asn381, Asn391, and Asn432 are each glycosylated (N-linked (GlcNAc...) asparagine). Residues 418 to 553 (DFPPTPPVTF…AMVFLVENGE (136 aa)) enclose the Plastocyanin-like 3 domain. His470, His473, His475, His532, Cys533, His534, and His538 together coordinate Cu cation.

The protein belongs to the multicopper oxidase family. The cofactor is Cu cation. Mostly expressed in roots. Also detected in leaves, stems and flowers but not in siliques.

It is found in the secreted. It localises to the extracellular space. Its subcellular location is the apoplast. The catalysed reaction is 4 hydroquinone + O2 = 4 benzosemiquinone + 2 H2O. In terms of biological role, lignin degradation and detoxification of lignin-derived products. In Arabidopsis thaliana (Mouse-ear cress), this protein is Laccase-13 (LAC13).